A 137-amino-acid chain; its full sequence is MKTFVLVSCLLVFTQIIYALDIKEISIMNRILEKCIRTVPKRENDPINPLRNVNVWYCAFTKRGIFTPKGVNTKQYINYCEKTAISPADIKLCKKIASKCVKKVYDRPGPIIERSKNLLSCVLKKGLLELTVYGKKK.

The first 19 residues, 1–19 (MKTFVLVSCLLVFTQIIYA), serve as a signal peptide directing secretion.

This sequence belongs to the ant venom allergen 2/4 family. In terms of assembly, monomer. As to expression, expressed by the venom gland.

It is found in the secreted. The polypeptide is Venom allergen 4 (Solenopsis invicta (Red imported fire ant)).